The sequence spans 220 residues: 3-dehydroquinate dehydratase (220 aa).

3-dehydroquinate contacts are provided by residues 29–31 and Arg-56; that span reads EFR. The active-site Proton donor/acceptor is the His-116. Lys-142 acts as the Schiff-base intermediate with substrate in catalysis. Arg-180, Ser-200, and Gln-204 together coordinate 3-dehydroquinate.

It belongs to the type-I 3-dehydroquinase family. As to quaternary structure, homodimer.

The enzyme catalyses 3-dehydroquinate = 3-dehydroshikimate + H2O. It functions in the pathway metabolic intermediate biosynthesis; chorismate biosynthesis; chorismate from D-erythrose 4-phosphate and phosphoenolpyruvate: step 3/7. Functionally, involved in the third step of the chorismate pathway, which leads to the biosynthesis of aromatic amino acids. Catalyzes the cis-dehydration of 3-dehydroquinate (DHQ) and introduces the first double bond of the aromatic ring to yield 3-dehydroshikimate. This chain is 3-dehydroquinate dehydratase, found in Methanocaldococcus jannaschii (strain ATCC 43067 / DSM 2661 / JAL-1 / JCM 10045 / NBRC 100440) (Methanococcus jannaschii).